Consider the following 513-residue polypeptide: Noroxomaritidine synthase (513 aa).

The chain crosses the membrane as a helical span at residues 14-34 (HYPEILIAIACFLIFSLLLSA). Cys-458 contacts heme.

Belongs to the cytochrome P450 family. The cofactor is heme.

It localises to the membrane. It catalyses the reaction 4'-O-methylnorbelladine + reduced [NADPH--hemoprotein reductase] + O2 = (10bS,4aR)-noroxomaritidine + oxidized [NADPH--hemoprotein reductase] + 2 H2O + H(+). It carries out the reaction 4'-O-methylnorbelladine + reduced [NADPH--hemoprotein reductase] + O2 = (10bR,4aS)-noroxomaritidine + oxidized [NADPH--hemoprotein reductase] + 2 H2O + H(+). It participates in alkaloid biosynthesis. Functionally, cytochrome P450 that catalyzes an intramolecular para-para' C-C phenol coupling of 4'-O-methylnorbelladine in alkaloids biosynthesis, including haemanthamine- and crinamine-type alkaloids, promising anticancer agents. Catalyzes the formation of (10bR,4aS)-noroxomaritidine and (10bS,4aR)-noroxomaritidine from 4'-O-methylnorbelladine. Also produces N-demethylnarwedine as a minor product. Involved in the biosynthesis of haemanthamine. Can also use 4'-O-methyl-N-methylnorbelladine, (S)- and (R)-coclaurine as substrates, but not 3'-O-methylnorbelladine, 3',4'-O-dimethylnorbelladine, norbelladine, haemanthamine, (10bS,4aR)- or (10bR,4aS)-noroxomaritidine, isovanillin or tyramine. In Narcissus aff. pseudonarcissus MK-2014 (Daffodil), this protein is Noroxomaritidine synthase.